A 356-amino-acid chain; its full sequence is Nicotinate-nucleotide--dimethylbenzimidazole phosphoribosyltransferase (356 aa).

Glu317 (proton acceptor) is an active-site residue.

Belongs to the CobT family. As to quaternary structure, homodimer.

It catalyses the reaction 5,6-dimethylbenzimidazole + nicotinate beta-D-ribonucleotide = alpha-ribazole 5'-phosphate + nicotinate + H(+). It participates in nucleoside biosynthesis; alpha-ribazole biosynthesis; alpha-ribazole from 5,6-dimethylbenzimidazole: step 1/2. In terms of biological role, catalyzes the synthesis of alpha-ribazole-5'-phosphate from nicotinate mononucleotide (NAMN) and 5,6-dimethylbenzimidazole (DMB). The polypeptide is Nicotinate-nucleotide--dimethylbenzimidazole phosphoribosyltransferase (Salmonella dublin (strain CT_02021853)).